A 423-amino-acid polypeptide reads, in one-letter code: UDP-N-acetylglucosamine 1-carboxyvinyltransferase 2 (423 aa).

Position 23-24 (23-24 (KN)) interacts with phosphoenolpyruvate. Arg93 contributes to the UDP-N-acetyl-alpha-D-glucosamine binding site. The Proton donor role is filled by Cys117. Cys117 carries the post-translational modification 2-(S-cysteinyl)pyruvic acid O-phosphothioketal. Residues 122–126 (RPIDQ), Asp305, and Ile327 contribute to the UDP-N-acetyl-alpha-D-glucosamine site.

It belongs to the EPSP synthase family. MurA subfamily.

It is found in the cytoplasm. The enzyme catalyses phosphoenolpyruvate + UDP-N-acetyl-alpha-D-glucosamine = UDP-N-acetyl-3-O-(1-carboxyvinyl)-alpha-D-glucosamine + phosphate. It functions in the pathway cell wall biogenesis; peptidoglycan biosynthesis. Its function is as follows. Cell wall formation. Adds enolpyruvyl to UDP-N-acetylglucosamine. The protein is UDP-N-acetylglucosamine 1-carboxyvinyltransferase 2 of Listeria innocua serovar 6a (strain ATCC BAA-680 / CLIP 11262).